The sequence spans 73 residues: Maltose-binding periplasmic protein (73 aa).

An N-terminal signal peptide occupies residues 1 to 30 (MMTKTNLKMGARTLALSVLATLVLSASALA).

Belongs to the bacterial solute-binding protein 1 family.

Its subcellular location is the periplasm. Functionally, involved in the high-affinity maltose membrane transport system. Initial receptor for the active transport of and chemotaxis toward maltooligosaccharides. The protein is Maltose-binding periplasmic protein (malE) of Photorhabdus luminescens (Xenorhabdus luminescens).